The sequence spans 1135 residues: Receptor-type guanylate cyclase gcy-4 (1135 aa).

The signal sequence occupies residues 1–20; it reads MTQLLRFLLILSIFCDFSHS. Over 21 to 483 the chain is Extracellular; it reads QRPTIRVGIA…CPIPFFDQYR (463 aa). Residues N37, N193, N209, N251, N349, N375, N431, N436, and N447 are each glycosylated (N-linked (GlcNAc...) asparagine). A helical transmembrane segment spans residues 484 to 504; it reads LLIFVFVIVAGLLILAIFTCL. At 505-1135 the chain is on the cytoplasmic side; the sequence is TSMVRNQRAE…VMRREMMRVS (631 aa). The interval 535–560 is disordered; it reads KGRRLSTDSENSTVTKSSKGSSSKNF. A Protein kinase domain is found at 545 to 837; the sequence is NSTVTKSSKG…KDNLMDHVFS (293 aa). Low complexity predominate over residues 546-560; it reads STVTKSSKGSSSKNF. One can recognise a Guanylate cyclase domain in the interval 895–1025; that stretch reads TVFFSDLVKF…DTVNTASRME (131 aa).

This sequence belongs to the adenylyl cyclase class-4/guanylyl cyclase family. In terms of tissue distribution, expressed bilaterally in ASE neurons.

It localises to the cell membrane. It catalyses the reaction GTP = 3',5'-cyclic GMP + diphosphate. Its function is as follows. Guanylate cyclase involved in the production of the second messenger cGMP. Regulates chemotaxis responses toward salt ions in ASE sensory neurons. This chain is Receptor-type guanylate cyclase gcy-4, found in Caenorhabditis briggsae.